The primary structure comprises 120 residues: Large ribosomal subunit protein uL18 (120 aa).

The disordered stretch occupies residues 1–22 (MITKTSKNAARQKRHARVRAKL). The segment covering 10-20 (ARQKRHARVRA) has biased composition (basic residues).

The protein belongs to the universal ribosomal protein uL18 family. As to quaternary structure, part of the 50S ribosomal subunit; part of the 5S rRNA/L5/L18/L25 subcomplex. Contacts the 5S and 23S rRNAs.

In terms of biological role, this is one of the proteins that bind and probably mediate the attachment of the 5S RNA into the large ribosomal subunit, where it forms part of the central protuberance. This Bacillus velezensis (strain DSM 23117 / BGSC 10A6 / LMG 26770 / FZB42) (Bacillus amyloliquefaciens subsp. plantarum) protein is Large ribosomal subunit protein uL18.